A 954-amino-acid chain; its full sequence is Valine--tRNA ligase (954 aa).

The 'HIGH' region motif lies at 48 to 58 (PNVTGSLHMGH). Positions 560–564 (KMSKS) match the 'KMSKS' region motif. Residue lysine 563 participates in ATP binding. Residues 883–954 (AGFINKEAEL…QTQYQAIENL (72 aa)) adopt a coiled-coil conformation.

Belongs to the class-I aminoacyl-tRNA synthetase family. ValS type 1 subfamily. Monomer.

Its subcellular location is the cytoplasm. The catalysed reaction is tRNA(Val) + L-valine + ATP = L-valyl-tRNA(Val) + AMP + diphosphate. Functionally, catalyzes the attachment of valine to tRNA(Val). As ValRS can inadvertently accommodate and process structurally similar amino acids such as threonine, to avoid such errors, it has a 'posttransfer' editing activity that hydrolyzes mischarged Thr-tRNA(Val) in a tRNA-dependent manner. In Actinobacillus pleuropneumoniae serotype 5b (strain L20), this protein is Valine--tRNA ligase.